Consider the following 201-residue polypeptide: Chromophore lyase CpcT/CpeT (201 aa).

Belongs to the CpcT/CpeT biliprotein lyase family.

The protein resides in the plastid. Its subcellular location is the organellar chromatophore. Functionally, covalently attaches a chromophore to Cys residue(s) of phycobiliproteins. This chain is Chromophore lyase CpcT/CpeT, found in Paulinella chromatophora.